A 258-amino-acid chain; its full sequence is MKTPNAQEAEGQQTRAAAGRATGSANMTKKKVSQKKQRGRPSSQPRRNIVGCRISHGWKEGDEPITQWKGTVLDQVPINPSLYLVKYDGIDCVYGLELHRDERVLSLKILSDRVASSHISDANLANTIIGKAVEHMFEGEHGSKDEWRGMVLAQAPIMKAWFYITYEKDPVLYMYQLLDDYKEGDLRIMPESSESPPTEREPGGVVDGLIGKHVEYTKEDGSKRIGMVIHQVETKPSVYFIKFDDDFHIYVYDLVKKS.

A compositionally biased stretch (low complexity) spans M1–G23. Positions M1–I49 are disordered. Residues T28–G39 are compositionally biased toward basic residues. 3 tudor-like domain regions span residues V50–H99, I129–L178, and I210–V255. Histone H3K4me3 and H3R8me2a binding stretches follow at residues E138 and D246–H248.

Belongs to the SPIN/STSY family. In terms of assembly, interacts with C11orf84/SPINDOC.

It localises to the nucleus. Functionally, may be involved in the regulation of cell cycle progression. Exhibits H3K4me3-binding activity. The chain is Spindlin-2A (SPIN2A) from Homo sapiens (Human).